A 237-amino-acid polypeptide reads, in one-letter code: Ribosomal RNA small subunit methyltransferase G (237 aa).

Residues Gly-78, Phe-83, 129 to 130, and Arg-148 each bind S-adenosyl-L-methionine; that span reads AE. The disordered stretch occupies residues 218–237; that stretch reads KKETPNKYPRKAGMPNKRPL.

Belongs to the methyltransferase superfamily. RNA methyltransferase RsmG family.

The protein resides in the cytoplasm. Specifically methylates the N7 position of a guanine in 16S rRNA. This is Ribosomal RNA small subunit methyltransferase G from Streptococcus pneumoniae (strain JJA).